An 80-amino-acid chain; its full sequence is OMEGA-myrmeciitoxin(02)-Mg1a (80 aa).

Residues 1 to 30 (MKNNYISTCIVYLMAALLLISVISIKECTA) form the signal peptide. The region spanning 35 to 75 (YGDPCSDDLKDYCIHGDCFFLKELNQPACRCYTGYYGSRCE) is the EGF-like domain. 3 cysteine pairs are disulfide-bonded: Cys-39/Cys-52, Cys-47/Cys-63, and Cys-65/Cys-74.

The protein belongs to the EGF domain peptide family. As to expression, expressed by the venom gland.

It is found in the secreted. In terms of biological role, ant peptide with probable defensive activity which acts as a potent agonist of the mammalian epidermal growth factor receptor (EGFR) (EC(50)=6.3 nM). Mimics, both structurally and functionally, vertebrate epidermal growth factor (EGF) peptide hormones. In vivo, intraplantar injection in mice causes long-lasting (several days) hypersensitivity of the injected paw to both mechanical and thermal stimuli. Its long-lasting effect is unusual for venom toxins whose effects are usually immediate. One possible explanation is that it would reduce the duration of a nest attack, discourage future attacks, or enhance the actions of subsequent exposure to other pain-inducing venom peptides. This chain is OMEGA-myrmeciitoxin(02)-Mg1a, found in Myrmecia gulosa (Red bulldog ant).